Consider the following 206-residue polypeptide: tRNA(Phe) 7-((3-amino-3-carboxypropyl)-4-demethylwyosine(37)-N(4))-methyltransferase 2 (206 aa).

It belongs to the TYW3 family.

It carries out the reaction 4-demethyl-7-[(3S)-3-amino-3-carboxypropyl]wyosine(37) in tRNA(Phe) + S-adenosyl-L-methionine = 7-[(3S)-3-amino-3-carboxypropyl]wyosine(37) in tRNA(Phe) + S-adenosyl-L-homocysteine + H(+). Its function is as follows. S-adenosyl-L-methionine-dependent methyltransferase that acts as a component of the wyosine derivatives biosynthesis pathway. Probably methylates N-4 position of wybutosine-86 to produce wybutosine-72. The chain is tRNA(Phe) 7-((3-amino-3-carboxypropyl)-4-demethylwyosine(37)-N(4))-methyltransferase 2 from Pyrococcus abyssi (strain GE5 / Orsay).